Here is an 884-residue protein sequence, read N- to C-terminus: Alanine--tRNA ligase (884 aa).

His-572, His-576, Cys-673, and His-677 together coordinate Zn(2+).

It belongs to the class-II aminoacyl-tRNA synthetase family. It depends on Zn(2+) as a cofactor.

The protein localises to the cytoplasm. The enzyme catalyses tRNA(Ala) + L-alanine + ATP = L-alanyl-tRNA(Ala) + AMP + diphosphate. In terms of biological role, catalyzes the attachment of alanine to tRNA(Ala) in a two-step reaction: alanine is first activated by ATP to form Ala-AMP and then transferred to the acceptor end of tRNA(Ala). Also edits incorrectly charged Ser-tRNA(Ala) and Gly-tRNA(Ala) via its editing domain. In Xylella fastidiosa (strain M23), this protein is Alanine--tRNA ligase.